The primary structure comprises 472 residues: MTVETFKPKQTTTLDIPVKTLEAASTNAVTTGNRIGFVSLGCPKNLVDSERILTQLRIDGYEVTNSYANADLVIVNTCGFIDAAVEESLDAVREALEENGKVIVTGCLGAKENQIREVHPDVLEITGPHSYEAVLKHVHKYVPKPEHNPFTSLIPQTGVKLTPKHYAYLKISEGCDNRCTFCIIPSLRGDLDSRPAGSILDEAKRLVESGVQEILVVSQDTSAYGKDKGGRTDFWNGMPVKQDITSLARQLGKMGAWVRLHYIYPYPWVDDLIPLMAEGLILPYLDIPMQHASPRILKMMKRPGRVDRQLEAIQRWREICPDLVIRSTFIVGFPGETEEDFQILLDFLKEARLDRVGCFKYSEVDGAVANTIAELISEDVKEDRYHRFMEVQAEISAERLARFVGRTLDILIDDVDEEGAIGRSFADAPEIDGMVFINGETELEPGMLVRARITHSDEHDLWAEVVDADTQD.

Residues 33–143 form the MTTase N-terminal domain; it reads NRIGFVSLGC…VLKHVHKYVP (111 aa). [4Fe-4S] cluster is bound by residues Cys-42, Cys-78, Cys-107, Cys-175, Cys-179, and Cys-182. A Radical SAM core domain is found at 161–398; sequence LTPKHYAYLK…MEVQAEISAE (238 aa). Residues 401–467 form the TRAM domain; sequence ARFVGRTLDI…EHDLWAEVVD (67 aa).

It belongs to the methylthiotransferase family. RimO subfamily. [4Fe-4S] cluster serves as cofactor.

It localises to the cytoplasm. It carries out the reaction L-aspartate(89)-[ribosomal protein uS12]-hydrogen + (sulfur carrier)-SH + AH2 + 2 S-adenosyl-L-methionine = 3-methylsulfanyl-L-aspartate(89)-[ribosomal protein uS12]-hydrogen + (sulfur carrier)-H + 5'-deoxyadenosine + L-methionine + A + S-adenosyl-L-homocysteine + 2 H(+). Functionally, catalyzes the methylthiolation of an aspartic acid residue of ribosomal protein uS12. This chain is Ribosomal protein uS12 methylthiotransferase RimO, found in Shewanella baltica (strain OS155 / ATCC BAA-1091).